The primary structure comprises 387 residues: Sorting nexin-7 (387 aa).

One can recognise a PX domain in the interval 30-151 (KDLFITVDAP…VFLTAQAEEL (122 aa)). Arg-73, Gln-75, Lys-103, and Arg-117 together coordinate a 1,2-diacyl-sn-glycero-3-phospho-(1D-myo-inositol-3-phosphate). The BAR domain occupies 178–387 (GVKNRPEEFM…PSEEDSEEKL (210 aa)).

It belongs to the sorting nexin family. As to quaternary structure, heterodimer; heterodimerizes with SNX4.

It is found in the early endosome membrane. Involved in the regulation of endocytosis and in several stages of intracellular trafficking. Together with SNX4, involved in autophagosome assembly by regulating trafficking and recycling of phospholipid scramblase ATG9A. The chain is Sorting nexin-7 from Mus musculus (Mouse).